Consider the following 208-residue polypeptide: Octanoyltransferase (208 aa).

The BPL/LPL catalytic domain maps to 29 to 208 (KTQDELVWLL…KEFNKVFCNC (180 aa)). Substrate-binding positions include 68-75 (RGGKYTYH), 140-142 (AFG), and 153-155 (GVS). Residue Cys-171 is the Acyl-thioester intermediate of the active site.

Belongs to the LipB family.

It localises to the cytoplasm. The catalysed reaction is octanoyl-[ACP] + L-lysyl-[protein] = N(6)-octanoyl-L-lysyl-[protein] + holo-[ACP] + H(+). The protein operates within protein modification; protein lipoylation via endogenous pathway; protein N(6)-(lipoyl)lysine from octanoyl-[acyl-carrier-protein]: step 1/2. In terms of biological role, catalyzes the transfer of endogenously produced octanoic acid from octanoyl-acyl-carrier-protein onto the lipoyl domains of lipoate-dependent enzymes. Lipoyl-ACP can also act as a substrate although octanoyl-ACP is likely to be the physiological substrate. This chain is Octanoyltransferase, found in Ehrlichia ruminantium (strain Gardel).